The primary structure comprises 417 residues: Gamma-glutamyl phosphate reductase (417 aa).

This sequence belongs to the gamma-glutamyl phosphate reductase family.

It localises to the cytoplasm. It carries out the reaction L-glutamate 5-semialdehyde + phosphate + NADP(+) = L-glutamyl 5-phosphate + NADPH + H(+). Its pathway is amino-acid biosynthesis; L-proline biosynthesis; L-glutamate 5-semialdehyde from L-glutamate: step 2/2. Functionally, catalyzes the NADPH-dependent reduction of L-glutamate 5-phosphate into L-glutamate 5-semialdehyde and phosphate. The product spontaneously undergoes cyclization to form 1-pyrroline-5-carboxylate. In Enterococcus faecalis (strain ATCC 700802 / V583), this protein is Gamma-glutamyl phosphate reductase.